A 578-amino-acid polypeptide reads, in one-letter code: GTP diphosphokinase CRSH3, chloroplastic (578 aa).

Residues 1–45 constitute a chloroplast transit peptide; it reads MANAGVNETVAVAVAIDAPGVGHDHGAAGEVRRPSTRRLAPAGSG. Positions 99-199 constitute an HD domain; that stretch reads SVSRALVVAA…LELAVKLDAM (101 aa). EF-hand domains are found at residues 468–503 and 506–537; these read ATAG…LGAG and DAEE…VKLK. 10 residues coordinate Ca(2+): D481, N483, D485, R487, E492, D515, N517, D519, S521, and E526.

The protein belongs to the RelA/SpoT family. In terms of tissue distribution, expressed in roots and shoots.

It localises to the plastid. The protein resides in the chloroplast. The catalysed reaction is GTP + ATP = guanosine 3'-diphosphate 5'-triphosphate + AMP. Activated by calcium. Its function is as follows. Possesses calcium-dependent ppGpp (guanosine 3'-diphosphate 5'-diphosphate) synthetase activity in vitro and is able to functionally complement E.coli relA mutants. May be involved in a rapid plant ppGpp-mediated response to pathogens and other stresses. This is GTP diphosphokinase CRSH3, chloroplastic from Oryza sativa subsp. japonica (Rice).